Consider the following 123-residue polypeptide: Ribosome-binding factor A (123 aa).

Belongs to the RbfA family. In terms of assembly, monomer. Binds 30S ribosomal subunits, but not 50S ribosomal subunits or 70S ribosomes.

It is found in the cytoplasm. In terms of biological role, one of several proteins that assist in the late maturation steps of the functional core of the 30S ribosomal subunit. Associates with free 30S ribosomal subunits (but not with 30S subunits that are part of 70S ribosomes or polysomes). Required for efficient processing of 16S rRNA. May interact with the 5'-terminal helix region of 16S rRNA. The polypeptide is Ribosome-binding factor A (Legionella pneumophila (strain Paris)).